The following is a 3375-amino-acid chain: Basement membrane proteoglycan (3375 aa).

Residues 1 to 22 form the signal peptide; sequence MKRSSTVLAALLALLLVATNDA. Residues 45–130 form the Ig-like C2-type 1 domain; sequence VQITVFPSEK…NTVEARATLS (86 aa). Intrachain disulfides connect Cys66-Cys114, Cys149-Cys161, Cys156-Cys174, Cys168-Cys183, Cys190-Cys202, Cys197-Cys215, Cys209-Cys224, Cys233-Cys246, Cys240-Cys259, Cys253-Cys268, and Cys293-Cys344. LDL-receptor class A domains are found at residues 148–184, 189–225, and 232–269; these read QCMADEKACGNNECVKNDYVCDGEPDCRDRSDEANCP, TCEPNEFKCNNNKCVQKMWLCDGDDDCGDNSDELNCN, and DCKPTEFQCHDRRQCVPSSFHCDGTNDCHDGSDEVGCV. Residues 271-355 enclose the Ig-like C2-type 2 domain; it reads PTVVDPPQTN…AINVKGRVLA (85 aa). The interval 364-385 is disordered; that stretch reads VDDPRPQPPQPPTAPPQRASCD. The span at 369–378 shows a compositional bias: pro residues; the sequence is PQPPQPPTAP. Cystine bridges form between Cys384–Cys400, Cys402–Cys411, and Cys414–Cys429. Residues 384-431 enclose the Laminin EGF-like 1; truncated domain; that stretch reads CDTRGAVTPYPNNYGTCECKSQVTGPNCDQCKPGAFHLSEKSPEGCLK. The Laminin EGF-like 2; first part domain occupies 432 to 441; sequence CFCFGVSNDC. A Laminin IV type A 1 domain is found at 450 to 633; it reads KDRLMFAGDA…PDGLALEVEQ (184 aa). Cystine bridges form between Cys634–Cys648, Cys636–Cys689, Cys691–Cys700, and Cys703–Cys718. The Laminin EGF-like 2; second part domain occupies 634 to 666; that stretch reads CVCPPGYLGTSCEDCAPGYERSGYGPYLGTCVP. The region spanning 674-720 is the Laminin EGF-like 3; truncated domain; it reads CGPGAVAPTAPAQGQCQCKASVIGPNCDRCAPNSFGLAPTNPQGCIP. In terms of domain architecture, Laminin EGF-like 4; first part spans 721-730; that stretch reads CFCSGVTQQC. In terms of domain architecture, Laminin IV type A 2 spans 740–921; the sequence is VSIDYARGDR…QGLTAAEVEQ (182 aa). Residues 922–954 form the Laminin EGF-like 4; second part domain; the sequence is CICPPGYVGTSCEDCAPGYSRTGGGLYLGLCEK. 15 cysteine pairs are disulfide-bonded: Cys955–Cys964, Cys957–Cys971, Cys974–Cys983, Cys986–Cys1002, Cys1011–Cys1021, Cys1013–Cys1027, Cys1030–Cys1039, Cys1042–Cys1058, Cys1061–Cys1069, Cys1063–Cys1079, Cys1082–Cys1091, Cys1094–Cys1109, Cys1152–Cys1200, Cys1247–Cys1294, and Cys1338–Cys1384. Laminin EGF-like domains lie at 955–1004, 1011–1060, and 1061–1111; these read CECN…DCQP, CHCN…DCTP, and CPCP…VCEP. Ig-like C2-type domains lie at 1126-1222, 1226-1311, 1319-1401, 1410-1499, 1503-1585, 1588-1680, 1690-1785, 1793-1878, 1886-1970, 1973-2069, 2073-2163, 2173-2260, 2263-2343, 2349-2435, and 2446-2530; these read PHEV…KRIS, PQPV…AVLE, PKVD…EPVQ, PQRG…ARLN, PQAI…RPVE, PARV…TPAT, PQVE…STLN, PRPV…VRLE, PTAV…GNVN, PSLT…IYIE, PSRI…AVHV, PKVE…TAVS, QQDK…GFVT, PDTI…RTVL, and TFTV…VDLQ. Residues 1388–1400 show a composition bias toward polar residues; it reads DPSDNTPLQSEPV. Disordered regions lie at residues 1388–1426 and 1478–1497; these read DPSDNTPLQSEPVQLNIRDPAPPQRGAAPQIDPPNQTVN and EYECTSTEPDGSTQLSPPAR. N-linked (GlcNAc...) asparagine glycosylation is present at Asn1422. 4 disulfide bridges follow: Cys1435-Cys1481, Cys1527-Cys1573, Cys1618-Cys1663, and Cys1719-Cys1767. Polar residues predominate over residues 1481–1497; that stretch reads CTSTEPDGSTQLSPPAR. Residues 1773–1792 are disordered; it reads NSPPVKTNPSTLNVTPEGTP. Residues 1776–1788 show a composition bias toward polar residues; that stretch reads PVKTNPSTLNVTP. Intrachain disulfides connect Cys1814–Cys1861, Cys1907–Cys1954, Cys1998–Cys2053, Cys2099–Cys2147, Cys2195–Cys2242, Cys2284–Cys2329, Cys2374–Cys2420, Cys2467–Cys2514, Cys2713–Cys2725, Cys2719–Cys2736, Cys2738–Cys2747, Cys2754–Cys2764, Cys2759–Cys2773, Cys2775–Cys2784, and Cys2935–Cys2960. Positions 1880–1918 are disordered; sequence TEDQEPPTAVVEPRTWNGKPGERHQFRCITTGSPTPKIT. A compositionally biased stretch (polar residues) spans 1907 to 1918; sequence CITTGSPTPKIT. A glycan (N-linked (GlcNAc...) asparagine) is linked at Asn2476. One can recognise a Laminin G-like 1 domain in the interval 2532–2713; it reads DDFIPVIDGE…PSSVVKYDAC (182 aa). Residues 2793–2960 form the Laminin G-like 2 domain; it reads PLGFTSDTSF…LSSSGDISSC (168 aa). Asn2950 carries an N-linked (GlcNAc...) asparagine glycan. The segment covering 2952–2963 has biased composition (low complexity); sequence SSSGDISSCEES. The segment at 2952-3124 is disordered; it reads SSSGDISSCE…GTLPPDSSSE (173 aa). Composition is skewed to acidic residues over residues 2979-2990 and 2999-3010; these read EEPEAVIEEPTT and PITEEPTEEPTT. The segment covering 3011–3033 has biased composition (low complexity); it reads TEEPTTTEEPTTTTEEPTTTTTE. Residues 3034–3044 show a composition bias toward basic and acidic residues; sequence EPYHIYETSRD. Positions 3049-3079 are enriched in low complexity; it reads IIIPVETTTTSTTTTSTTEEPEAEPALVLPT. Residues 3081–3094 show a composition bias toward acidic residues; the sequence is PVEENDVSDEEEEI. 4 disulfide bridges follow: Cys3141–Cys3152, Cys3146–Cys3162, Cys3164–Cys3173, and Cys3333–Cys3359. Residues Asn3143 and Asn3156 are each glycosylated (N-linked (GlcNAc...) asparagine). The Laminin G-like 3 domain occupies 3180-3359; that stretch reads EHAARFDGDA…AIDGKNVKPC (180 aa).

As to quaternary structure, component of an integrin containing attachment complex, composed of at least pat-2, pat-3, pat-4, pat-6, unc-52, unc-97 and unc-112. Detected on embryonic and adult body wall muscle cells (at protein level). Found in the basement membrane of all contractile tissues (at protein level). Expressed in gonadal sheath cells and spermatheca.

It localises to the secreted. It is found in the extracellular space. The protein localises to the extracellular matrix. Its subcellular location is the basement membrane. The protein resides in the cytoplasm. It localises to the myofibril. It is found in the sarcomere. The protein localises to the m line. In terms of biological role, component of an integrin containing attachment complex, which is required for muscle development and maintenance. Probable structural role in myofilament assembly and/or attachment of the myofilament lattice to the cell membrane. May be an extracellular anchor for integrin receptors in body wall muscles and myoepithelial sheath cells. During the formation of neuromuscular junctions at the larval stage, negatively regulates membrane protrusion from body wall muscles, probably downstream of the integrin complex formed by pat-2 and pat-3. Involved in ovulation. Required for normal lifespan. The polypeptide is Basement membrane proteoglycan (Caenorhabditis elegans).